The following is a 411-amino-acid chain: Phospholipase ABHD3 (411 aa).

The chain crosses the membrane as a helical; Signal-anchor for type II membrane protein span at residues 25-45 (VGFFGSGVGFSLILGFSVAYA). Positions 140–247 (PTVLLLPGLT…PLKAAATFSV (108 aa)) constitute an AB hydrolase-1 domain. Catalysis depends on charge relay system residues S220, D346, and H375.

This sequence belongs to the AB hydrolase superfamily. AB hydrolase 4 family.

It localises to the membrane. It carries out the reaction a 1,2-diacyl-sn-glycero-3-phosphocholine + H2O = a 1-acyl-sn-glycero-3-phosphocholine + a fatty acid + H(+). The enzyme catalyses a 1,2-diacyl-sn-glycero-3-phosphocholine + H2O = a 2-acyl-sn-glycero-3-phosphocholine + a fatty acid + H(+). It catalyses the reaction 1-tetradecanoyl-2-(9Z,12Z-octadecadienoyl)-sn-glycero-3-phosphocholine + H2O = 2-(9Z,12Z-octadecadienoyl)-sn-glycero-3-phosphocholine + tetradecanoate + H(+). The catalysed reaction is 1-tetradecanoyl-2-(9Z,12Z-octadecadienoyl)-sn-glycero-3-phosphocholine + H2O = 1-tetradecanoyl-sn-glycero-3-phosphocholine + (9Z,12Z)-octadecadienoate + H(+). It carries out the reaction 1-tetradecanoyl-2-(5Z,8Z,11Z,14Z-eicosatetraenoyl)-sn-glycero-3-phosphocholine + H2O = 2-(5Z,8Z,11Z,14Z)-eicosatetraenoyl-sn-glycero-3-phosphocholine + tetradecanoate + H(+). The enzyme catalyses 1-tetradecanoyl-2-(4Z,7Z,10Z,13Z,16Z,19Z-docosahexaenoyl)-sn-glycero-3-phosphocholine + H2O = 2-(4Z,7Z,10Z,13Z,16Z,19Z-docosahexaenoyl)-sn-glycero-3-phosphocholine + tetradecanoate + H(+). It catalyses the reaction 1,2-ditetradecanoyl-sn-glycero-3-phosphocholine + H2O = 2-tetradecanoyl-sn-glycero-3-phosphocholine + tetradecanoate + H(+). The catalysed reaction is 1-octadecanoyl-2-acetyl-sn-glycero-3-phosphocholine + H2O = 1-octadecanoyl-sn-glycero-3-phosphocholine + acetate + H(+). It carries out the reaction 1,2-ditetradecanoyl-sn-glycero-3-phosphocholine + H2O = 1-tetradecanoyl-sn-glycero-3-phosphocholine + tetradecanoate + H(+). The enzyme catalyses 1-octadecanoyl-2-pentanoyl-sn-glycero-3-phosphocholine + H2O = pentanoate + 1-octadecanoyl-sn-glycero-3-phosphocholine + H(+). It catalyses the reaction 1-octadecanoyl-2-hexanoyl-sn-glycero-3-phosphocholine + H2O = hexanoate + 1-octadecanoyl-sn-glycero-3-phosphocholine + H(+). The catalysed reaction is 1-octadecanoyl-2-octanoyl-sn-glycero-3-phosphocholine + H2O = 1-octadecanoyl-sn-glycero-3-phosphocholine + octanoate + H(+). It carries out the reaction 1-octadecanoyl-2-nonanoyl-sn-glycero-3-phosphocholine + H2O = nonanoate + 1-octadecanoyl-sn-glycero-3-phosphocholine + H(+). The enzyme catalyses 1-O-hexadecyl-2-nonadioyl-sn-glycero-3-phosphocholine + H2O = nonanedioate + 1-O-hexadecyl-sn-glycero-3-phosphocholine + H(+). It catalyses the reaction 1-hexadecanoyl-2-nonadioyl-sn-glycero-3-phosphocholine + H2O = nonanedioate + 1-hexadecanoyl-sn-glycero-3-phosphocholine + H(+). The catalysed reaction is 1-hexadecanoyl-2-(9-oxononanoyl)-sn-glycero-3-phosphocholine + H2O = 9-oxononanoate + 1-hexadecanoyl-sn-glycero-3-phosphocholine + H(+). It carries out the reaction 1-hexadecanoyl-2-(5-oxopentanoyl)-sn-glycero-3-phosphocholine + H2O = 5-oxopentanoate + 1-hexadecanoyl-sn-glycero-3-phosphocholine + H(+). The enzyme catalyses 1-hexadecanoyl-2-glutaroyl-sn-glycero-3-phosphocholine + H2O = glutarate + 1-hexadecanoyl-sn-glycero-3-phosphocholine + H(+). It catalyses the reaction 1-O-hexadecyl-2-acetyl-sn-glycero-3-phosphocholine + H2O = 1-O-hexadecyl-sn-glycero-3-phosphocholine + acetate + H(+). Phospholipase that may play a role in phospholipids remodeling. May selectively cleave myristate (C14)-containing phosphatidylcholines through its predominant phospholipase 1 activity, cleaving preferentially acyl groups in sn1 position. In parallel, may have a minor phospholipase 2 activity acting on acyl groups in position sn2. In addition to (C14)-containing phosphatidylcholines, may also act on other medium-chain-containing and oxidatively truncated phospholipids. The protein is Phospholipase ABHD3 of Bos taurus (Bovine).